Consider the following 494-residue polypeptide: Neuronal pentraxin receptor (494 aa).

Residues 1-2 (MK) are Cytoplasmic-facing. Residues 3–23 (FLAVLLAAGMLAFLGAVICII) form a helical; Signal-anchor for type II membrane protein membrane-spanning segment. Residues 24-494 (ASVPLAASPA…FDVCKRRAKA (471 aa)) are Extracellular-facing. A disordered region spans residues 37–80 (PGGTDNASAASAAGAPGPQRSLSALQGAGGSAGPSVLPGEPAAS). The N-linked (GlcNAc...) asparagine glycan is linked to asparagine 42. 2 stretches are compositionally biased toward low complexity: residues 43–62 (ASAA…SALQ) and 69–80 (GPSVLPGEPAAS). Asparagine 211 carries N-linked (GlcNAc...) asparagine glycosylation. Residues 286–488 (DAFKVSIPIR…GAKKAAFDVC (203 aa)) enclose the Pentraxin (PTX) domain. A disulfide bridge links cysteine 316 with cysteine 377. Asparagine 341, glutamate 419, glutamine 420, aspartate 421, and glutamine 431 together coordinate Ca(2+). Residue asparagine 457 is glycosylated (N-linked (GlcNAc...) asparagine).

In terms of assembly, interacts with KLHL2. Heteropentamer with NPTX1 and/or NPTX2. Also binds taipoxin-associated calcium-binding protein 49 (TCBP49/RCN2). The cofactor is Ca(2+). In terms of processing, N-glycosylated. Post-translationally, ubiquitinated by a cullin-RING-based BCR (BTB-CUL3-RBX1) E3 ubiquitin-protein ligase complex containing KLHL2. As to expression, brain specific.

It is found in the membrane. Its function is as follows. May be involved in mediating uptake of synaptic material during synapse remodeling or in mediating the synaptic clustering of AMPA glutamate receptors at a subset of excitatory synapses. This is Neuronal pentraxin receptor (Nptxr) from Rattus norvegicus (Rat).